The following is an 81-amino-acid chain: uncharacterized protein (81 aa).

The first 24 residues, 1-24, serve as a signal peptide directing secretion; sequence MRKILKIVSLLILLLLLVYSFFSP. Topologically, residues 25–28 are extracellular; that stretch reads NSQL. A helical membrane pass occupies residues 29 to 49; sequence FVFVQLIIIAFLIGFGINCFV. Topologically, residues 50–81 are cytoplasmic; the sequence is KKERYQGTLYFVIAICNITINLDKINELIQSI.

It localises to the cell membrane. This is an uncharacterized protein from Bacillus subtilis (strain 168).